We begin with the raw amino-acid sequence, 185 residues long: Transmembrane protein 252 (185 aa).

A run of 2 helical transmembrane segments spans residues 8-28 (VLCA…GFFI) and 39-59 (LVVA…GIFW). The disordered stretch occupies residues 125-149 (YTETSLEPQDKDKNDPQPEAPPPYP).

The protein resides in the membrane. The protein is Transmembrane protein 252 (Tmem252) of Rattus norvegicus (Rat).